Reading from the N-terminus, the 222-residue chain is Thiol:disulfide interchange protein DsbL (222 aa).

Residues 1–27 form the signal peptide; it reads MSKLGISSLFKTILLTAALAVSFTASA. The Thioredoxin domain maps to 28-221; that stretch reads FTEGTDYMVL…MADLIRELAS (194 aa). A disulfide bond links C56 and C59.

This sequence belongs to the thioredoxin family. DsbL subfamily. In terms of assembly, interacts with DsbI.

It is found in the periplasm. Functionally, involved in disulfide-bond formation. Acts by transferring its disulfide bond to other proteins. Part of a redox system composed of DsbI and DsbL that mediates formation of an essential disulfide bond in AssT. The protein is Thiol:disulfide interchange protein DsbL of Escherichia coli O6:H1 (strain CFT073 / ATCC 700928 / UPEC).